Reading from the N-terminus, the 494-residue chain is Cytochrome P450 2A13 (494 aa).

Asn297 lines the substrate pocket. Heme is bound at residue Cys439.

The protein belongs to the cytochrome P450 family. The cofactor is heme. In terms of tissue distribution, expressed in liver and a number of extrahepatic tissues, including nasal mucosa, lung, trachea, brain, mammary gland, prostate, testis, and uterus, but not in heart, kidney, bone marrow, colon, small intestine, spleen, stomach, thymus, or skeletal muscle.

It is found in the endoplasmic reticulum membrane. The protein localises to the microsome membrane. It catalyses the reaction an organic molecule + reduced [NADPH--hemoprotein reductase] + O2 = an alcohol + oxidized [NADPH--hemoprotein reductase] + H2O + H(+). Exhibits a coumarin 7-hydroxylase activity. Active in the metabolic activation of hexamethylphosphoramide, N,N-dimethylaniline, 2'-methoxyacetophenone, N-nitrosomethylphenylamine, and the tobacco-specific carcinogen, 4-(methylnitrosamino)-1-(3-pyridyl)-1-butanone. Possesses phenacetin O-deethylation activity. This is Cytochrome P450 2A13 (CYP2A13) from Homo sapiens (Human).